A 175-amino-acid chain; its full sequence is MLDNPLIQQVLFEVMEEDVVGFDVLNVLIDSNEVTDDEISRQLEVKLNNIRRILYKLYEARLVDYNREKDEETNWYTYTWKPSLEKLPALVVKKMKNILDELKKQLSTEENGMFFYCMGCELKFTFEDAMDMGFRCPQCGGVLHEYDNKKDMATIKEQIAYIEDEFNQNPLFFKY.

The region spanning 3 to 88 is the HTH TFE/IIEalpha-type domain; sequence DNPLIQQVLF…TWKPSLEKLP (86 aa).

It belongs to the TFE family. As to quaternary structure, monomer. Interaction with RNA polymerase subunits RpoF and RpoE is necessary for Tfe stimulatory transcription activity. Able to interact with Tbp and RNA polymerase in the absence of DNA promoter. Interacts both with the preinitiation and elongation complexes.

Its function is as follows. Transcription factor that plays a role in the activation of archaeal genes transcribed by RNA polymerase. Facilitates transcription initiation by enhancing TATA-box recognition by TATA-box-binding protein (Tbp), and transcription factor B (Tfb) and RNA polymerase recruitment. Not absolutely required for transcription in vitro, but particularly important in cases where Tbp or Tfb function is not optimal. It dynamically alters the nucleic acid-binding properties of RNA polymerases by stabilizing the initiation complex and destabilizing elongation complexes. Seems to translocate with the RNA polymerase following initiation and acts by binding to the non template strand of the transcription bubble in elongation complexes. The sequence is that of Transcription factor E from Methanococcus vannielii (strain ATCC 35089 / DSM 1224 / JCM 13029 / OCM 148 / SB).